The chain runs to 503 residues: Probable cytosol aminopeptidase (503 aa).

Residues Lys-270 and Asp-275 each coordinate Mn(2+). Lys-282 is an active-site residue. Mn(2+) contacts are provided by Asp-293, Asp-352, and Glu-354. Arg-356 is a catalytic residue.

This sequence belongs to the peptidase M17 family. Mn(2+) is required as a cofactor.

Its subcellular location is the cytoplasm. It carries out the reaction Release of an N-terminal amino acid, Xaa-|-Yaa-, in which Xaa is preferably Leu, but may be other amino acids including Pro although not Arg or Lys, and Yaa may be Pro. Amino acid amides and methyl esters are also readily hydrolyzed, but rates on arylamides are exceedingly low.. The catalysed reaction is Release of an N-terminal amino acid, preferentially leucine, but not glutamic or aspartic acids.. Presumably involved in the processing and regular turnover of intracellular proteins. Catalyzes the removal of unsubstituted N-terminal amino acids from various peptides. This chain is Probable cytosol aminopeptidase, found in Sodalis glossinidius (strain morsitans).